We begin with the raw amino-acid sequence, 301 residues long: Phosphoribosylaminoimidazole-succinocarboxamide synthase (301 aa).

It belongs to the SAICAR synthetase family.

It catalyses the reaction 5-amino-1-(5-phospho-D-ribosyl)imidazole-4-carboxylate + L-aspartate + ATP = (2S)-2-[5-amino-1-(5-phospho-beta-D-ribosyl)imidazole-4-carboxamido]succinate + ADP + phosphate + 2 H(+). It participates in purine metabolism; IMP biosynthesis via de novo pathway; 5-amino-1-(5-phospho-D-ribosyl)imidazole-4-carboxamide from 5-amino-1-(5-phospho-D-ribosyl)imidazole-4-carboxylate: step 1/2. The chain is Phosphoribosylaminoimidazole-succinocarboxamide synthase (ADE1) from Cyberlindnera jadinii (Torula yeast).